A 372-amino-acid polypeptide reads, in one-letter code: uncharacterized protein (372 aa).

A helical transmembrane segment spans residues 224–244 (GSTVGVVIGVVIVIFIGFIII). Ser-329 carries the phosphoserine modification.

It localises to the vacuole membrane. This is an uncharacterized protein from Saccharomyces cerevisiae (strain ATCC 204508 / S288c) (Baker's yeast).